The primary structure comprises 133 residues: Small ribosomal subunit protein uS8 (133 aa).

Belongs to the universal ribosomal protein uS8 family. As to quaternary structure, part of the 30S ribosomal subunit. Contacts proteins S5 and S12.

In terms of biological role, one of the primary rRNA binding proteins, it binds directly to 16S rRNA central domain where it helps coordinate assembly of the platform of the 30S subunit. The protein is Small ribosomal subunit protein uS8 of Prochlorococcus marinus subsp. pastoris (strain CCMP1986 / NIES-2087 / MED4).